Here is a 456-residue protein sequence, read N- to C-terminus: 3-isopropylmalate dehydratase large subunit (456 aa).

Positions 336, 396, and 399 each coordinate [4Fe-4S] cluster.

The protein belongs to the aconitase/IPM isomerase family. LeuC type 1 subfamily. Heterodimer of LeuC and LeuD. [4Fe-4S] cluster is required as a cofactor.

It catalyses the reaction (2R,3S)-3-isopropylmalate = (2S)-2-isopropylmalate. It functions in the pathway amino-acid biosynthesis; L-leucine biosynthesis; L-leucine from 3-methyl-2-oxobutanoate: step 2/4. Catalyzes the isomerization between 2-isopropylmalate and 3-isopropylmalate, via the formation of 2-isopropylmaleate. The protein is 3-isopropylmalate dehydratase large subunit of Staphylococcus aureus (strain JH1).